A 382-amino-acid polypeptide reads, in one-letter code: Mannitol-1-phosphate 5-dehydrogenase (382 aa).

NAD(+) is bound at residue 3–14 (ALHFGAGNIGRG).

The protein belongs to the mannitol dehydrogenase family.

The enzyme catalyses D-mannitol 1-phosphate + NAD(+) = beta-D-fructose 6-phosphate + NADH + H(+). In Salmonella typhi, this protein is Mannitol-1-phosphate 5-dehydrogenase.